Consider the following 406-residue polypeptide: Cysteine desulfurase (406 aa).

The residue at position 226 (Lys-226) is an N6-(pyridoxal phosphate)lysine. The Cysteine persulfide intermediate role is filled by Cys-364.

Belongs to the class-V pyridoxal-phosphate-dependent aminotransferase family. Csd subfamily. In terms of assembly, homodimer. Interacts with SufE and the SufBCD complex composed of SufB, SufC and SufD. The interaction with SufE is required to mediate the direct transfer of the sulfur atom from the S-sulfanylcysteine. Pyridoxal 5'-phosphate serves as cofactor.

The protein localises to the cytoplasm. It catalyses the reaction (sulfur carrier)-H + L-cysteine = (sulfur carrier)-SH + L-alanine. It carries out the reaction L-selenocysteine + AH2 = hydrogenselenide + L-alanine + A + H(+). The protein operates within cofactor biosynthesis; iron-sulfur cluster biosynthesis. Functionally, cysteine desulfurases mobilize the sulfur from L-cysteine to yield L-alanine, an essential step in sulfur metabolism for biosynthesis of a variety of sulfur-containing biomolecules. Component of the suf operon, which is activated and required under specific conditions such as oxidative stress and iron limitation. Acts as a potent selenocysteine lyase in vitro, that mobilizes selenium from L-selenocysteine. Selenocysteine lyase activity is however unsure in vivo. This chain is Cysteine desulfurase, found in Escherichia coli O157:H7 (strain EC4115 / EHEC).